A 235-amino-acid chain; its full sequence is Large ribosomal subunit protein uL1 (235 aa).

It belongs to the universal ribosomal protein uL1 family. In terms of assembly, part of the 50S ribosomal subunit.

Functionally, binds directly to 23S rRNA. The L1 stalk is quite mobile in the ribosome, and is involved in E site tRNA release. Its function is as follows. Protein L1 is also a translational repressor protein, it controls the translation of the L11 operon by binding to its mRNA. This chain is Large ribosomal subunit protein uL1, found in Mycobacterium bovis (strain ATCC BAA-935 / AF2122/97).